The chain runs to 160 residues: 6,7-dimethyl-8-ribityllumazine synthase (160 aa).

5-amino-6-(D-ribitylamino)uracil is bound by residues Trp28, 59-61 (ALE), and 81-83 (CVI). 86–87 (ET) contacts (2S)-2-hydroxy-3-oxobutyl phosphate. The Proton donor role is filled by His89. Asn114 serves as a coordination point for 5-amino-6-(D-ribitylamino)uracil. Arg128 serves as a coordination point for (2S)-2-hydroxy-3-oxobutyl phosphate.

This sequence belongs to the DMRL synthase family.

It catalyses the reaction (2S)-2-hydroxy-3-oxobutyl phosphate + 5-amino-6-(D-ribitylamino)uracil = 6,7-dimethyl-8-(1-D-ribityl)lumazine + phosphate + 2 H2O + H(+). It participates in cofactor biosynthesis; riboflavin biosynthesis; riboflavin from 2-hydroxy-3-oxobutyl phosphate and 5-amino-6-(D-ribitylamino)uracil: step 1/2. Its function is as follows. Catalyzes the formation of 6,7-dimethyl-8-ribityllumazine by condensation of 5-amino-6-(D-ribitylamino)uracil with 3,4-dihydroxy-2-butanone 4-phosphate. This is the penultimate step in the biosynthesis of riboflavin. This chain is 6,7-dimethyl-8-ribityllumazine synthase, found in Corynebacterium jeikeium (strain K411).